Here is a 295-residue protein sequence, read N- to C-terminus: MPGSLRKMPVWLPIVILLVAMASIQGGASLAKSLFPLVGAPGVTALRLALGTLILIAFFKPWRLRFAKEQRLPLLFYGVSLGGMNYLFYLSIQTVPLGIAVALEFTGPLAVALFSSRRPVDFVWVVLAVLGLWFLLPLGQDVSHVDLTGCALALGAGACWAIYILSGQRAGAEHGPATVAIGSLIAALIFVPIGALQAGEALWHWSVIPLGLAVAILSTALPYSLEMIALTRLPTRTFGTLMSMEPALAAVSGMIFLGETLTPIQLLALGAIIAASMGSTLTVRKESKIKELDIN.

The Cytoplasmic segment spans residues methionine 1–proline 9. The chain crosses the membrane as a helical span at residues valine 10–leucine 30. The region spanning leucine 30–leucine 135 is the EamA 1 domain. The Periplasmic portion of the chain corresponds to alanine 31–valine 38. A helical transmembrane segment spans residues glycine 39 to phenylalanine 59. Residues lysine 60–arginine 71 are Cytoplasmic-facing. A helical transmembrane segment spans residues leucine 72–isoleucine 92. Position 93 (glutamine 93) is a topological domain, periplasmic. The chain crosses the membrane as a helical span at residues threonine 94–phenylalanine 114. Residues serine 115 to arginine 118 are Cytoplasmic-facing. The helical transmembrane segment at proline 119–glycine 139 threads the bilayer. Residues glutamine 140–aspartate 146 are Periplasmic-facing. The chain crosses the membrane as a helical span at residues leucine 147–glycine 167. The EamA 2 domain occupies cysteine 159–glycine 278. The Cytoplasmic segment spans residues glutamine 168–glycine 175. A helical membrane pass occupies residues proline 176–leucine 196. Over glutamine 197–glutamate 200 the chain is Periplasmic. Residues alanine 201–leucine 221 form a helical membrane-spanning segment. Residues proline 222–threonine 237 are Cytoplasmic-facing. The helical transmembrane segment at phenylalanine 238–glycine 258 threads the bilayer. The Periplasmic portion of the chain corresponds to glutamate 259–threonine 262. A helical membrane pass occupies residues proline 263 to valine 283. Topologically, residues arginine 284–asparagine 295 are cytoplasmic.

This sequence belongs to the drug/metabolite transporter (DMT) superfamily. 10 TMS drug/metabolite exporter (DME) (TC 2.A.7.3) family.

It is found in the cell inner membrane. In terms of biological role, involved in the efflux of threonine and homoserine. The protein is Threonine/homoserine exporter RhtA (rhtA) of Escherichia coli O157:H7.